Reading from the N-terminus, the 194-residue chain is ATP-dependent Clp protease proteolytic subunit (194 aa).

S98 acts as the Nucleophile in catalysis. H123 is an active-site residue.

It belongs to the peptidase S14 family. As to quaternary structure, fourteen ClpP subunits assemble into 2 heptameric rings which stack back to back to give a disk-like structure with a central cavity, resembling the structure of eukaryotic proteasomes.

Its subcellular location is the cytoplasm. It catalyses the reaction Hydrolysis of proteins to small peptides in the presence of ATP and magnesium. alpha-casein is the usual test substrate. In the absence of ATP, only oligopeptides shorter than five residues are hydrolyzed (such as succinyl-Leu-Tyr-|-NHMec, and Leu-Tyr-Leu-|-Tyr-Trp, in which cleavage of the -Tyr-|-Leu- and -Tyr-|-Trp bonds also occurs).. Its function is as follows. Cleaves peptides in various proteins in a process that requires ATP hydrolysis. Has a chymotrypsin-like activity. Plays a major role in the degradation of misfolded proteins. This chain is ATP-dependent Clp protease proteolytic subunit, found in Syntrophotalea carbinolica (strain DSM 2380 / NBRC 103641 / GraBd1) (Pelobacter carbinolicus).